A 546-amino-acid chain; its full sequence is NRAMP-like transporter smf-2 (546 aa).

Topologically, residues 1–42 are cytoplasmic; sequence MPGFQNANISDLAPPAREKTFDDTIAVKIPEDEKNTWFSWRK. A helical transmembrane segment spans residues 43 to 63; the sequence is LWAFTGPGFLMSIAYLDPGNI. At 64-70 the chain is on the extracellular side; sequence ESDLQAG. The chain crosses the membrane as a helical span at residues 71–91; that stretch reads AQAEYKLLWVLLVSHIVGMLL. Residues 92-119 lie on the Cytoplasmic side of the membrane; sequence QRMSARLGVVSGKHMAEIAYDYYPLVPR. The helical transmembrane segment at 120 to 140 threads the bilayer; that stretch reads IILWLMIEIAIVCSDMQEVIG. Residues 141 to 152 lie on the Extracellular side of the membrane; sequence TAIAIYLLSSGK. A helical transmembrane segment spans residues 153–173; sequence IPLLVGVLITILDTFTFLFID. At 174–181 the chain is on the cytoplasmic side; it reads RYGIRKLE. A helical transmembrane segment spans residues 182 to 202; the sequence is FIFVALISTMAISFGYEFVVM. Residues 203 to 228 are Extracellular-facing; the sequence is KPVLTKVLTGTVVPWCSGCGKEEIIT. A helical membrane pass occupies residues 229 to 249; sequence AISIFGAVIMPHNFYLHSALV. The Cytoplasmic segment spans residues 250-270; sequence KSRKVDRSSKTRIAEANKYFS. The chain crosses the membrane as a helical span at residues 271 to 291; sequence IESAFALSVSFFINLFVLSVF. Over 292–334 the chain is Extracellular; it reads ARGLYQKTNGDVNSMCLSHNDIPDSNVFPNNTSSVTVDLFQGG. Asn-321 is a glycosylation site (N-linked (GlcNAc...) asparagine). Residues 335-355 traverse the membrane as a helical segment; it reads IYLGCQFGLFAMIIWAIGIFA. Residues 356–386 lie on the Cytoplasmic side of the membrane; that stretch reads AGQSSTMTGTYTGQFVMEGFVRISWPKWKRV. The helical transmembrane segment at 387–407 threads the bilayer; the sequence is LITRAVAITPTLILCIKAHGI. The Extracellular portion of the chain corresponds to 408 to 415; it reads KNLTGMND. Asn-409 is a glycosylation site (N-linked (GlcNAc...) asparagine). The helical transmembrane segment at 416–436 threads the bilayer; it reads FLNCVQMVQLPFALIPMITFT. The Cytoplasmic segment spans residues 437–453; it reads SSKRIMHNFRTSKPLQY. The chain crosses the membrane as a helical span at residues 454–474; sequence FSIICGIITIGINVYFIFQYV. Residues 475–483 lie on the Extracellular side of the membrane; that stretch reads TENFGTGWL. Residues 484-504 form a helical membrane-spanning segment; the sequence is IFVIIGPFTLLYIAFILYLAI. At 505-546 the chain is on the cytoplasmic side; that stretch reads YCLVACELMNDTVNLPGFDFHRTLELDAPWITETFVVNDVYF.

It belongs to the NRAMP family. As to expression, expressed in dopaminergic neurons (at protein level). Primarily expressed in mc1, mc2 and mc3 epithelial cells of the pharynx and vpil-6 pharyngeal-intestinal valve cells displaying an anterior-posterior expression gradient. Expressed in gonad sheath cells.

It is found in the apical cell membrane. It localises to the cytoplasmic vesicle membrane. Its function is as follows. Probable divalent metal ion transporter which regulates Mn(2+) uptake. The chain is NRAMP-like transporter smf-2 from Caenorhabditis elegans.